The primary structure comprises 119 residues: Ribonuclease P protein component (119 aa).

This sequence belongs to the RnpA family. As to quaternary structure, consists of a catalytic RNA component (M1 or rnpB) and a protein subunit.

It catalyses the reaction Endonucleolytic cleavage of RNA, removing 5'-extranucleotides from tRNA precursor.. Functionally, RNaseP catalyzes the removal of the 5'-leader sequence from pre-tRNA to produce the mature 5'-terminus. It can also cleave other RNA substrates such as 4.5S RNA. The protein component plays an auxiliary but essential role in vivo by binding to the 5'-leader sequence and broadening the substrate specificity of the ribozyme. This chain is Ribonuclease P protein component, found in Borreliella burgdorferi (strain ZS7) (Borrelia burgdorferi).